A 331-amino-acid polypeptide reads, in one-letter code: Sulfate/thiosulfate import ATP-binding protein CysA (331 aa).

The region spanning 2–232 is the ABC transporter domain; the sequence is ITVTNARKNY…PANEFVMSFL (231 aa). Residue 34-41 participates in ATP binding; it reads GPSGSGKS.

It belongs to the ABC transporter superfamily. Sulfate/tungstate importer (TC 3.A.1.6) family. In terms of assembly, the complex is composed of two ATP-binding proteins (CysA), two transmembrane proteins (CysT and CysW) and a solute-binding protein (CysP).

It localises to the cell membrane. The enzyme catalyses sulfate(out) + ATP + H2O = sulfate(in) + ADP + phosphate + H(+). It carries out the reaction thiosulfate(out) + ATP + H2O = thiosulfate(in) + ADP + phosphate + H(+). Part of the ABC transporter complex CysAWTP involved in sulfate/thiosulfate import. Responsible for energy coupling to the transport system. The chain is Sulfate/thiosulfate import ATP-binding protein CysA from Nocardia farcinica (strain IFM 10152).